Consider the following 654-residue polypeptide: tRNA 5-methylaminomethyl-2-thiouridine biosynthesis bifunctional protein MnmC (654 aa).

Residues 1–236 (MPTLLQHAQI…KWEVMSGAYV (236 aa)) form a tRNA (mnm(5)s(2)U34)-methyltransferase region. An FAD-dependent cmnm(5)s(2)U34 oxidoreductase region spans residues 262–654 (IGAGLAGSSS…FGLRRLIRGK (393 aa)).

This sequence in the N-terminal section; belongs to the methyltransferase superfamily. tRNA (mnm(5)s(2)U34)-methyltransferase family. The protein in the C-terminal section; belongs to the DAO family. FAD is required as a cofactor.

The protein localises to the cytoplasm. It catalyses the reaction 5-aminomethyl-2-thiouridine(34) in tRNA + S-adenosyl-L-methionine = 5-methylaminomethyl-2-thiouridine(34) in tRNA + S-adenosyl-L-homocysteine + H(+). Catalyzes the last two steps in the biosynthesis of 5-methylaminomethyl-2-thiouridine (mnm(5)s(2)U) at the wobble position (U34) in tRNA. Catalyzes the FAD-dependent demodification of cmnm(5)s(2)U34 to nm(5)s(2)U34, followed by the transfer of a methyl group from S-adenosyl-L-methionine to nm(5)s(2)U34, to form mnm(5)s(2)U34. The chain is tRNA 5-methylaminomethyl-2-thiouridine biosynthesis bifunctional protein MnmC from Pseudomonas putida (strain ATCC 700007 / DSM 6899 / JCM 31910 / BCRC 17059 / LMG 24140 / F1).